The sequence spans 381 residues: Malonyl-CoA-acyl carrier protein transacylase, mitochondrial (381 aa).

Active-site residues include serine 151 and histidine 268. Lysine 312 is modified (N6-succinyllysine).

It belongs to the type II malonyltransferase family. In terms of tissue distribution, expressed in retinal ganglion cells.

The protein resides in the mitochondrion. The enzyme catalyses holo-[ACP] + malonyl-CoA = malonyl-[ACP] + CoA. It functions in the pathway lipid metabolism; fatty acid biosynthesis. In terms of biological role, catalyzes the transfer of a malonyl moiety from malonyl-CoA to the free thiol group of the phosphopantetheine arm of the mitochondrial ACP protein (NDUFAB1). This suggests the existence of the biosynthesis of fatty acids in mitochondria. The chain is Malonyl-CoA-acyl carrier protein transacylase, mitochondrial from Mus musculus (Mouse).